Reading from the N-terminus, the 425-residue chain is UPF0597 protein VF_0641 (425 aa).

It belongs to the UPF0597 family.

The polypeptide is UPF0597 protein VF_0641 (Aliivibrio fischeri (strain ATCC 700601 / ES114) (Vibrio fischeri)).